We begin with the raw amino-acid sequence, 287 residues long: UPF0761 membrane protein MS0032 (287 aa).

6 helical membrane-spanning segments follow: residues 37-57 (MLAIVPLVMVVFAIFSAFPMF), 93-113 (SMSAVGIISLIAVALLLINQI), 128-148 (FIFSMTIYWTLLTLGPIFIGM), 174-194 (LLSFVPFLLTWLSFSLIYTLV), 204-224 (AAVGALVAAIFFTLGKKAFAW), and 238-258 (AMATLPITLLWIQLSWLFILL).

This sequence belongs to the UPF0761 family.

The protein resides in the cell inner membrane. This chain is UPF0761 membrane protein MS0032, found in Mannheimia succiniciproducens (strain KCTC 0769BP / MBEL55E).